Reading from the N-terminus, the 743-residue chain is DEAD-box ATP-dependent RNA helicase 3B, chloroplastic (743 aa).

The N-terminal 37 residues, 1–37 (MASLTLPALALALSNPGAVRLRAAAFRCWALRRRGWA), are a transit peptide targeting the chloroplast. The interval 60 to 79 (GSDDEDGEGPYGSDADEGFE) is disordered. Over residues 61–79 (SDDEDGEGPYGSDADEGFE) the composition is skewed to acidic residues. The Q motif signature appears at 88-116 (LAIARLGLPDELVATLEKRGITHLFPIQR). Positions 119–295 (LIPALEGRDL…RRYLNNPLTI (177 aa)) constitute a Helicase ATP-binding domain. 132–139 (AKTGTGKT) provides a ligand contact to ATP. A DEAD box motif is present at residues 243–246 (DEAD). The Helicase C-terminal domain occupies 324–469 (VLSDLITVYA…ISPPSIEEVL (146 aa)). The interval 606 to 719 (LTKISKLPAL…RSSSFGGRES (114 aa)) is disordered. A compositionally biased stretch (gly residues) spans 642–653 (GGGASRGRGGWD). Over residues 657–671 (EDRFRRGGRSLRSDN) the composition is skewed to basic and acidic residues. The segment covering 688-719 (RSSSFGSRSSSYSSRGSPSFGGRSSSFGGRES) has biased composition (low complexity). A CCHC-type zinc finger spans residues 725–742 (GACFNCGESGHRATDCPN).

This sequence belongs to the DEAD box helicase family. DDX21/DDX50 subfamily.

It localises to the plastid. It is found in the chloroplast stroma. The catalysed reaction is ATP + H2O = ADP + phosphate + H(+). Functionally, nuclear genome-encoded factor involved in ribosome biogenesis in chloroplasts. Binds specific group II introns in chloroplasts and facilitates their splicing. Is required for rRNA maturation in plastids and may contribute to the assembly of the large (50S) ribosomal subunit. Required for normal development of chloroplasts. This chain is DEAD-box ATP-dependent RNA helicase 3B, chloroplastic, found in Zea mays (Maize).